The following is an 822-amino-acid chain: Ras GTPase-activating-like protein rgaA (822 aa).

The disordered stretch occupies residues 1–36 (MNKEEYSDISDSESEEVHETNNHNEHEHEEEDDTPE). The span at 15–27 (EEVHETNNHNEHE) shows a compositional bias: basic and acidic residues. Positions 104-152 (EDKESDWIAEIQELKRNLVSEVRRNHTLERDLNRLDKRIALLIKNRGNI) form a coiled coil. The tract at residues 161–822 (GLKAPKHKGD…IHLLNKLFLY (662 aa)) is required for interaction to rac1A. In terms of domain architecture, Ras-GAP spans 234–477 (FLLLSLYRLS…GDIKNYLQEI (244 aa)).

As to quaternary structure, heterotetramer. Quaternary complex with activated rac1A, ctxA and ctxB. Interacts directly with rac1A and ctxA. Preferentially interacts with activated forms of rac1A, rac1B and rac1C. Interacts with racE.

Its subcellular location is the cytoplasm. It localises to the cell cortex. It is found in the cleavage furrow. Part of signaling pathway that is required for completion of cytokinesis. gapA and rgaA control cortexillin localization to the cleavage furrow and hence may be involved in cleavage of the midbody in the final stage of cytokinesis by regulating the actin cytoskeleton. Forms a complex by linking activated rac1A to ctxA. Assembly of this complex is necessary for the recruitment of cortexillin to the midzone of a dividing cell. Overexpression leads to the suppression of the formation of cellular projections containing F-actin and to a defect in cytokinesis. This is Ras GTPase-activating-like protein rgaA (rgaA) from Dictyostelium discoideum (Social amoeba).